Reading from the N-terminus, the 147-residue chain is uncharacterized protein (147 aa).

Positions 29–147 (PYGNNSVHQG…GHHHGHHHKH (119 aa)) are disordered. Polar residues-rich tracts occupy residues 34–45 (SVHQGQPHTDQN) and 60–73 (PQAQ…NQPS). The span at 75–92 (PFGGAGYTGPTAGTGFGN) shows a compositional bias: gly residues. Over residues 122–147 (DGHHKKHGRKEHDHHHGHHHGHHHKH) the composition is skewed to basic residues.

This is an uncharacterized protein from Caenorhabditis elegans.